A 309-amino-acid chain; its full sequence is MTNFIYNKHIISINDLSKKEMNSIIDFSFSFKLKSFNTFLKNKIIAICFLEASTRTRLSFESAIYRSGGTCIGFSDSSNTSLEKKGESFIDTISIISKYVDAIIVRHPKEGAARLASEYSNNIPVINAGDGANQHPTQTILDLFSIKETQGKLDNLNIAIIGDLKYSRTVHSLSQAISKFKKNKIYFIAHSALMLPSYIINILEEKKVEYSFHDSIEEVIKKIDILYITRIQKERLDSSEYANINAKFILKKSDLFYAKKNLKILHPLPRSNELSFEVDKTSYAYYFQQAENGLFVRQAILSSILNKKL.

Residues R55 and T56 each coordinate carbamoyl phosphate. An L-aspartate-binding site is contributed by K85. Residues R106, H135, and Q138 each contribute to the carbamoyl phosphate site. The L-aspartate site is built by R168 and R230. Carbamoyl phosphate-binding residues include L268 and P269.

It belongs to the aspartate/ornithine carbamoyltransferase superfamily. ATCase family. In terms of assembly, heterododecamer (2C3:3R2) of six catalytic PyrB chains organized as two trimers (C3), and six regulatory PyrI chains organized as three dimers (R2).

It carries out the reaction carbamoyl phosphate + L-aspartate = N-carbamoyl-L-aspartate + phosphate + H(+). It participates in pyrimidine metabolism; UMP biosynthesis via de novo pathway; (S)-dihydroorotate from bicarbonate: step 2/3. Functionally, catalyzes the condensation of carbamoyl phosphate and aspartate to form carbamoyl aspartate and inorganic phosphate, the committed step in the de novo pyrimidine nucleotide biosynthesis pathway. In Wigglesworthia glossinidia brevipalpis, this protein is Aspartate carbamoyltransferase catalytic subunit.